Reading from the N-terminus, the 142-residue chain is Large ribosomal subunit protein uL13 (142 aa).

Belongs to the universal ribosomal protein uL13 family. As to quaternary structure, part of the 50S ribosomal subunit.

Its function is as follows. This protein is one of the early assembly proteins of the 50S ribosomal subunit, although it is not seen to bind rRNA by itself. It is important during the early stages of 50S assembly. The polypeptide is Large ribosomal subunit protein uL13 (Psychromonas ingrahamii (strain DSM 17664 / CCUG 51855 / 37)).